We begin with the raw amino-acid sequence, 341 residues long: N-acetyl-gamma-glutamyl-phosphate reductase (341 aa).

Cysteine 146 is a catalytic residue.

This sequence belongs to the NAGSA dehydrogenase family. Type 1 subfamily.

The protein localises to the cytoplasm. The enzyme catalyses N-acetyl-L-glutamate 5-semialdehyde + phosphate + NADP(+) = N-acetyl-L-glutamyl 5-phosphate + NADPH + H(+). It functions in the pathway amino-acid biosynthesis; L-arginine biosynthesis; N(2)-acetyl-L-ornithine from L-glutamate: step 3/4. Functionally, catalyzes the NADPH-dependent reduction of N-acetyl-5-glutamyl phosphate to yield N-acetyl-L-glutamate 5-semialdehyde. In Limosilactobacillus fermentum (strain NBRC 3956 / LMG 18251) (Lactobacillus fermentum), this protein is N-acetyl-gamma-glutamyl-phosphate reductase.